The primary structure comprises 197 residues: Thymidine kinase (197 aa).

ATP is bound by residues 9–16 (SAMDAGKT) and 87–90 (DEIH). Catalysis depends on Glu88, which acts as the Proton acceptor. Cys145, Cys147, Cys187, and His190 together coordinate Zn(2+).

Belongs to the thymidine kinase family. Homotetramer.

The protein resides in the cytoplasm. The enzyme catalyses thymidine + ATP = dTMP + ADP + H(+). This is Thymidine kinase from Francisella tularensis subsp. holarctica (strain LVS).